The chain runs to 87 residues: Conotoxin Ca6.2 (87 aa).

The signal sequence occupies residues methionine 1 to glycine 19. Residues glutamate 20–arginine 52 constitute a propeptide that is removed on maturation. 3 disulfide bridges follow: cysteine 55-cysteine 64, cysteine 58-cysteine 70, and cysteine 63-cysteine 84.

It belongs to the conotoxin Q superfamily. As to expression, expressed by the venom duct.

It is found in the secreted. The protein is Conotoxin Ca6.2 of Conus caracteristicus (Characteristic cone).